The primary structure comprises 79 residues: UPF0401 protein YkfF (79 aa).

This sequence belongs to the UPF0401 family.

This chain is UPF0401 protein YkfF (ykfF), found in Escherichia coli (strain K12).